The chain runs to 404 residues: Cystinosin homolog (404 aa).

Residues 20–123 lie on the Lumenal side of the membrane; sequence TNNLVVRQKE…FARITVIRSH (104 aa). Residues Asn46, Asn53, Asn79, and Asn97 are each glycosylated (N-linked (GlcNAc...) asparagine). The chain crosses the membrane as a helical span at residues 124 to 144; sequence FLAILIQIVGWTYFFAWSISF. Positions 125-191 constitute a PQ-loop 1 domain; that stretch reads LAILIQIVGW…MYYNSHVKNE (67 aa). Residues 145-163 are Cytoplasmic-facing; the sequence is YPQMYLNFKRKSVVGLNFD. A helical membrane pass occupies residues 164–184; that stretch reads FLSLNLVGFCAYAIFNLLMYY. Residues 185-207 are Lumenal-facing; the sequence is NSHVKNEYNIVNPRSPPPVLLND. Residues 208–228 form a helical membrane-spanning segment; that stretch reads VVFAVHAFLACFITILQCLFY. Topologically, residues 229 to 238 are cytoplasmic; sequence ERDNQSVSSK. The helical transmembrane segment at 239–259 threads the bilayer; sequence CIALMIVLISFGFCSAAATVL. Over 260–263 the chain is Lumenal; the sequence is RKIQ. Residues 264 to 285 traverse the membrane as a helical segment; it reads LLSFVTSLSYIKMAVTCCKYFP. The 62-residue stretch at 266–327 folds into the PQ-loop 2 domain; that stretch reads SFVTSLSYIK…MILQAVNVND (62 aa). Residues 286 to 295 lie on the Cytoplasmic side of the membrane; the sequence is QAYFNYTRKS. A helical transmembrane segment spans residues 296–316; the sequence is TVGWSIGNIMLDFTGGTLDIL. Over 317-337 the chain is Lumenal; it reads QMILQAVNVNDWSAFYANPVK. Residues 338 to 358 form a helical membrane-spanning segment; it reads FGLGFVSIFFDIIFMVQHYVL. At 359–404 the chain is on the cytoplasmic side; that stretch reads YPNAEVPHNEYHGVDNPNPDNIARDAEQYAGDSESMESTEPIIVHD.

This sequence belongs to the cystinosin family.

The protein resides in the lysosome membrane. Its subcellular location is the cytoplasmic vesicle. The protein localises to the phagosome. It carries out the reaction L-cystine(out) + H(+)(out) = L-cystine(in) + H(+)(in). Its function is as follows. Cystine/H(+) symporter that mediates export of cystine, the oxidized dimer of cysteine, from lysosomes. May play a role in the degradation of engulfed apoptotic cells. The chain is Cystinosin homolog (ctns-1) from Caenorhabditis elegans.